Consider the following 245-residue polypeptide: tRNA pseudouridine synthase A 2 (245 aa).

Residue aspartate 53 is the Nucleophile of the active site. Tyrosine 111 is a substrate binding site.

This sequence belongs to the tRNA pseudouridine synthase TruA family. Homodimer.

It catalyses the reaction uridine(38/39/40) in tRNA = pseudouridine(38/39/40) in tRNA. Formation of pseudouridine at positions 38, 39 and 40 in the anticodon stem and loop of transfer RNAs. This Bacillus cereus (strain ATCC 10987 / NRS 248) protein is tRNA pseudouridine synthase A 2.